Here is a 353-residue protein sequence, read N- to C-terminus: UPF0283 membrane protein YcjF (353 aa).

Residues 1–19 (MSEPLKPRIDFAEPLKEES) are compositionally biased toward basic and acidic residues. A disordered region spans residues 1 to 29 (MSEPLKPRIDFAEPLKEESTSTFKAQQTF). Polar residues predominate over residues 20 to 29 (TSTFKAQQTF). Transmembrane regions (helical) follow at residues 70-90 (MVLG…IQWT), 100-120 (AALG…GSVI), and 213-233 (ESTL…FIAW).

It belongs to the UPF0283 family.

The protein localises to the cell inner membrane. In Salmonella arizonae (strain ATCC BAA-731 / CDC346-86 / RSK2980), this protein is UPF0283 membrane protein YcjF.